A 475-amino-acid polypeptide reads, in one-letter code: Ribulose bisphosphate carboxylase large chain (475 aa).

A propeptide spanning residues 1-2 (MS) is cleaved from the precursor. Pro3 bears the N-acetylproline mark. An N6,N6,N6-trimethyllysine modification is found at Lys14. Substrate is bound by residues Asn123 and Thr173. The active-site Proton acceptor is Lys175. Lys177 lines the substrate pocket. Mg(2+) is bound by residues Lys201, Asp203, and Glu204. Position 201 is an N6-carboxylysine (Lys201). The Proton acceptor role is filled by His294. Substrate is bound by residues Arg295, His327, and Ser379.

It belongs to the RuBisCO large chain family. Type I subfamily. In terms of assembly, heterohexadecamer of 8 large chains and 8 small chains; disulfide-linked. The disulfide link is formed within the large subunit homodimers. Requires Mg(2+) as cofactor. The disulfide bond which can form in the large chain dimeric partners within the hexadecamer appears to be associated with oxidative stress and protein turnover.

It localises to the plastid. The protein resides in the chloroplast. It catalyses the reaction 2 (2R)-3-phosphoglycerate + 2 H(+) = D-ribulose 1,5-bisphosphate + CO2 + H2O. The enzyme catalyses D-ribulose 1,5-bisphosphate + O2 = 2-phosphoglycolate + (2R)-3-phosphoglycerate + 2 H(+). Functionally, ruBisCO catalyzes two reactions: the carboxylation of D-ribulose 1,5-bisphosphate, the primary event in carbon dioxide fixation, as well as the oxidative fragmentation of the pentose substrate in the photorespiration process. Both reactions occur simultaneously and in competition at the same active site. The sequence is that of Ribulose bisphosphate carboxylase large chain from Psilotum nudum (Whisk fern).